Consider the following 143-residue polypeptide: Peptide methionine sulfoxide reductase MsrB (143 aa).

The region spanning 16 to 139 (DAELRRRLTP…NSAALNFESR (124 aa)) is the MsrB domain. The Zn(2+) site is built by Cys55, Cys58, Cys104, and Cys107. The Nucleophile role is filled by Cys128.

This sequence belongs to the MsrB Met sulfoxide reductase family. Requires Zn(2+) as cofactor.

It catalyses the reaction L-methionyl-[protein] + [thioredoxin]-disulfide + H2O = L-methionyl-(R)-S-oxide-[protein] + [thioredoxin]-dithiol. The sequence is that of Peptide methionine sulfoxide reductase MsrB from Burkholderia cenocepacia (strain HI2424).